A 307-amino-acid chain; its full sequence is Oxygen-dependent coproporphyrinogen-III oxidase (307 aa).

Residue serine 99 participates in substrate binding. Residues histidine 103 and histidine 113 each coordinate a divalent metal cation. Histidine 113 serves as the catalytic Proton donor. 115 to 117 (NVR) contributes to the substrate binding site. The a divalent metal cation site is built by histidine 152 and histidine 182. Positions 247–282 (YVEFNLVFDRGTLFGLQSGGRTESILMSMPPVVNWR) are important for dimerization. 265 to 267 (GGR) serves as a coordination point for substrate.

This sequence belongs to the aerobic coproporphyrinogen-III oxidase family. As to quaternary structure, homodimer. The cofactor is a divalent metal cation.

The protein localises to the cytoplasm. The enzyme catalyses coproporphyrinogen III + O2 + 2 H(+) = protoporphyrinogen IX + 2 CO2 + 2 H2O. Its pathway is porphyrin-containing compound metabolism; protoporphyrin-IX biosynthesis; protoporphyrinogen-IX from coproporphyrinogen-III (O2 route): step 1/1. Functionally, involved in the heme biosynthesis. Catalyzes the aerobic oxidative decarboxylation of propionate groups of rings A and B of coproporphyrinogen-III to yield the vinyl groups in protoporphyrinogen-IX. In Paraburkholderia xenovorans (strain LB400), this protein is Oxygen-dependent coproporphyrinogen-III oxidase.